The chain runs to 421 residues: Acyl-coenzyme A thioesterase 6 (421 aa).

Active-site charge relay system residues include Ser232, Asp326, and His360. The short motif at 419–421 (SKI) is the Peroxisome targeting signal element.

This sequence belongs to the C/M/P thioester hydrolase family.

The protein localises to the peroxisome. It is found in the cytoplasm. The catalysed reaction is pristanoyl-CoA + H2O = 2,6,10,14-tetramethylpentadecanoate + CoA + H(+). It carries out the reaction phytanoyl-CoA + H2O = 3,7,11,15-tetramethylhexadecanoate + CoA + H(+). It participates in lipid metabolism; fatty acid metabolism. Its function is as follows. Catalyzes the hydrolysis of acyl-CoAs into free fatty acids and coenzyme A (CoASH), regulating their respective intracellular levels. Catalyzes the hydrolysis of phytanoyl-CoA and pristanoyl-CoA, two methyl-branched fatty acids derived from phytol, that enter the body via the diet. This is Acyl-coenzyme A thioesterase 6 from Homo sapiens (Human).